Here is a 275-residue protein sequence, read N- to C-terminus: MATQALVSSSSLTFAAEAVRQSFRARSLPSSVGCSRKGLVRAAATPPVKQGGVDRPLWFASKQSLSYLDGSLPGDYGFDPLGLSDPEGTGGFIEPRWLAYGEVINGRFAMLGAVGAIAPEYLGKVGLIPQETALAWFQTGVIPPAGTYNYWADNYTLFVLEMALMGFAEHRRFQDWAKPGSMGKQYFLGLEKGFGGSGNPAYPGGPFFNPLGFGKDEKSLKELKLKEVKNGRLAMLAILGYFIQGLVTGVGPYQNLLDHVADPVNNNVLTSLKFH.

Residue W58 participates in chlorophyll b binding. The chlorophyll a site is built by F78, S84, and E102. Residues R107, I142, E169, and R172 each coordinate chlorophyll b. Chlorophyll a-binding residues include K226, E227, N230, R232, Q244, and H259. The chain crosses the membrane as a helical span at residues L233–Y253.

This sequence belongs to the light-harvesting chlorophyll a/b-binding (LHC) protein family. The LHC complex consists of chlorophyll a-b binding proteins. The cofactor is Binds at least 14 chlorophylls (8 Chl-a and 6 Chl-b) and carotenoids such as lutein and neoxanthin.. Post-translationally, photoregulated by reversible phosphorylation of its threonine residues.

It localises to the plastid. The protein localises to the chloroplast thylakoid membrane. Its function is as follows. The light-harvesting complex (LHC) functions as a light receptor, it captures and delivers excitation energy to photosystems with which it is closely associated. May channel protons produced in the catalytic Mn center of water oxidation into the thylakoid lumen. This Pisum sativum (Garden pea) protein is Chlorophyll a-b binding protein 3, chloroplastic.